The primary structure comprises 400 residues: N(alpha)-acyl-glutamine aminoacylase (400 aa).

Belongs to the peptidase M20 family. Zn(2+) is required as a cofactor.

It catalyses the reaction an N(2)-acyl-L-glutamine + H2O = a carboxylate + L-glutamine. It carries out the reaction N(2)-[(2E)-3-methylhex-2-enoyl]-L-glutaminate + H2O = (2E)-3-methylhex-2-enoate + L-glutamine. The enzyme catalyses N(2)-(3-hydroxy-3-methylhexanoyl)-L-glutaminate + H2O = 3-hydroxy-3-methylhexanoate + L-glutamine. Its activity is regulated as follows. Partial loss of activity with the combination Mn(2+) and chelating agents. Activity is lost in presence of 0.5 mM dithiothreitol. Its function is as follows. Hydrolyzes odorless N-alpha-acyl-L-glutamine conjugates of short- and medium-chain fatty acids, releasing human axillary malodor compounds. The enzyme is highly specific for the glutamine residue but has a low specificity for the acyl part of the substrate. The two most common products are 3-methyl-2-hexenoic acid (3M2H) and 3-hydroxy-3-methyl-hexanoic acid (HMHA), which are produced from the odorless precursors N-alpha-3-methyl-2-hexenoyl-L-glutamine (3M2H-Gln) and N-alpha-3-hydroxy-3-methylhexanoyl-L-glutamine (HMHA-Gln). In addition, over 28 different carboxylic acids contributing to human body odor are released by this enzyme from odorless axilla secretions, including several aliphatic 3-hydroxy acids with 4-Me branches, 3,4-unsaturated, 4-Et-branched aliphatic acids, and a variety of degradation products of amino acids. This is N(alpha)-acyl-glutamine aminoacylase from Corynebacterium striatum.